The sequence spans 496 residues: O-acetyltransferase cpsE (496 aa).

A compositionally biased stretch (polar residues) spans 203-217 (IGTQGQLPDGVQSSD). The segment at 203-228 (IGTQGQLPDGVQSSDDPTDGAGDIFE) is disordered.

Belongs to the fumigaclavine B O-acetyltransferase family.

It carries out the reaction campesine A + acetyl-CoA = campesine C + CoA. The protein operates within alkaloid biosynthesis. In terms of biological role, O-acetyltransferase; part of the gene cluster that mediates the biosynthesis of campesine G, a dimeric indole piperazine alkaloid that shows good insecticidal activity Galleria mellonella. Within the pathway, cpsE acetylates N13 of campesine A to produce campesine C. CpsE produces an inseparable mixture of two acyl-atropisomers due to the spontaneous rotation of an acyl group at N13 of piperazine ring. The non-canonical non-ribosomal peptide synthetase cpsA catalyzes the first steps of the pathway by producing L-tryptophanal and L-valinal from their respective amino-acids. These products condensate spontaneously to form trypyl-valyl pyrazine also known as didehydrocampesine A. The NmrA-like family domain-containing oxidoreductase cpsB is the next enzyme in cps pathway and reduces the unstable didehydrocampesine A to campesine A. The methyltransferase cpsF and the acetyltransferase cpsE both recognize N13 of piperazine ring to carry out methylation and acetylation of campesine A to produce campesine C and B, respectively. The cytochrome P450 monooxygenase cpsD then acts as a dimerase that catalyzes oxidative heterocoupling between campesine B and C to produce heterodimers with unexpected 6/5/6/6/6/6/5/6 eight-ring scaffold called campesine D. Finally,the cytochrome P450 monooxygenase cpsC is a regioselective dehydrogenase that catalyzes dehydrogenation reaction towards C2-N1 to produce campesine G. This chain is O-acetyltransferase cpsE, found in Aspergillus campestris (strain IBT 28561).